We begin with the raw amino-acid sequence, 430 residues long: MDLLSDIEKQLQKATAQGFLIALSGGLDSTVLLSLFAKLRQKQPHLPPLSVRAIHIHHGLSPNADSWAKHCQDLCDQFQIPLIIERVQVDKTNGIEAGAREARYQAIKKHLQTQEILVTAHHLNDQTETFFLALKRGSGLQGLGAMQQQSVLFGMPILRPLLGFTRTQLENYAQKEKLNWITDESNGDNRFDRNFLRNEILPKLRERWAYFDLAVQRSAQHCFEQQQLINDLLSEAFAEHCQIKNQFKLCQFRKYSLAKQTALLRMWLAENQLEMPSKRQLTQLINDVVFAKEEANPQFQLVNKVIRRYQDRLYLTKPFSDLTKYCLKLEQNTLSLPDDLGNLSVQENEHNLIFHWQDFSVTLEKTNLPISIRFGYSGKVKHHLKRPREDIKKIWQELSVPPWERNRIPLIFYGNKLKSAVGFFRVFDEY.

24–29 (SGGLDS) contacts ATP.

Belongs to the tRNA(Ile)-lysidine synthase family.

It localises to the cytoplasm. The enzyme catalyses cytidine(34) in tRNA(Ile2) + L-lysine + ATP = lysidine(34) in tRNA(Ile2) + AMP + diphosphate + H(+). In terms of biological role, ligates lysine onto the cytidine present at position 34 of the AUA codon-specific tRNA(Ile) that contains the anticodon CAU, in an ATP-dependent manner. Cytidine is converted to lysidine, thus changing the amino acid specificity of the tRNA from methionine to isoleucine. In Haemophilus influenzae (strain PittEE), this protein is tRNA(Ile)-lysidine synthase.